The chain runs to 284 residues: Bifunctional protein FolD (284 aa).

NADP(+) contacts are provided by residues 166 to 168 (GAS) and Ile-232.

Belongs to the tetrahydrofolate dehydrogenase/cyclohydrolase family. Homodimer.

It catalyses the reaction (6R)-5,10-methylene-5,6,7,8-tetrahydrofolate + NADP(+) = (6R)-5,10-methenyltetrahydrofolate + NADPH. The catalysed reaction is (6R)-5,10-methenyltetrahydrofolate + H2O = (6R)-10-formyltetrahydrofolate + H(+). The protein operates within one-carbon metabolism; tetrahydrofolate interconversion. Its function is as follows. Catalyzes the oxidation of 5,10-methylenetetrahydrofolate to 5,10-methenyltetrahydrofolate and then the hydrolysis of 5,10-methenyltetrahydrofolate to 10-formyltetrahydrofolate. The polypeptide is Bifunctional protein FolD (Shewanella sp. (strain W3-18-1)).